Consider the following 621-residue polypeptide: Chaperone protein HtpG (621 aa).

The a; substrate-binding stretch occupies residues 1–328; it reads MIQEKKKFDA…SEDLPLNISR (328 aa). The tract at residues 329–544 is b; sequence ESLQHNSVLE…DAAMDIRMER (216 aa). The interval 475 to 494 is disordered; that stretch reads SDIDVEQTTSQSEAKNTDSK. Residues 545–621 form a c region; it reads FLIEQKQIAN…LNDIVQKAIL (77 aa).

It belongs to the heat shock protein 90 family. As to quaternary structure, homodimer.

Its subcellular location is the cytoplasm. Its function is as follows. Molecular chaperone. Has ATPase activity. This chain is Chaperone protein HtpG, found in Rickettsia rickettsii (strain Iowa).